The chain runs to 157 residues: MRIGHGYDVHRFAEGDFITLGGVRIAHGFGLLAHSDGDVLLHALSDALLGAAALGDIGKHFPDTDPQFKGADSRVLLRHVVSLIHAKGWKVGNVDNTIVAQAPKMAPHIESMRALIAADLQVELDQVNVKATTTEKLGFVGREEGIAVHSVALLLRA.

Positions 8 and 10 each coordinate a divalent metal cation. Residues 8–10 (DVH) and 34–35 (HS) each bind 4-CDP-2-C-methyl-D-erythritol 2-phosphate. An a divalent metal cation-binding site is contributed by histidine 42. 4-CDP-2-C-methyl-D-erythritol 2-phosphate contacts are provided by residues 56-58 (DIG), 61-65 (FPDTD), 100-106 (AQAPKMA), 132-135 (TTTE), phenylalanine 139, and arginine 142.

Belongs to the IspF family. As to quaternary structure, homotrimer. The cofactor is a divalent metal cation.

It carries out the reaction 4-CDP-2-C-methyl-D-erythritol 2-phosphate = 2-C-methyl-D-erythritol 2,4-cyclic diphosphate + CMP. Its pathway is isoprenoid biosynthesis; isopentenyl diphosphate biosynthesis via DXP pathway; isopentenyl diphosphate from 1-deoxy-D-xylulose 5-phosphate: step 4/6. Functionally, involved in the biosynthesis of isopentenyl diphosphate (IPP) and dimethylallyl diphosphate (DMAPP), two major building blocks of isoprenoid compounds. Catalyzes the conversion of 4-diphosphocytidyl-2-C-methyl-D-erythritol 2-phosphate (CDP-ME2P) to 2-C-methyl-D-erythritol 2,4-cyclodiphosphate (ME-CPP) with a corresponding release of cytidine 5-monophosphate (CMP). This chain is 2-C-methyl-D-erythritol 2,4-cyclodiphosphate synthase, found in Pseudomonas fluorescens (strain Pf0-1).